A 316-amino-acid polypeptide reads, in one-letter code: Biotin synthase (316 aa).

The Radical SAM core domain maps to 36 to 264; that stretch reads FDNRITLCAI…TATLRICGGR (229 aa). The [4Fe-4S] cluster site is built by Cys-53, Cys-57, and Cys-60. [2Fe-2S] cluster is bound by residues Cys-129, Cys-189, and Arg-259.

The protein belongs to the radical SAM superfamily. Biotin synthase family. As to quaternary structure, homodimer. [4Fe-4S] cluster serves as cofactor. The cofactor is [2Fe-2S] cluster.

The enzyme catalyses (4R,5S)-dethiobiotin + (sulfur carrier)-SH + 2 reduced [2Fe-2S]-[ferredoxin] + 2 S-adenosyl-L-methionine = (sulfur carrier)-H + biotin + 2 5'-deoxyadenosine + 2 L-methionine + 2 oxidized [2Fe-2S]-[ferredoxin]. It participates in cofactor biosynthesis; biotin biosynthesis; biotin from 7,8-diaminononanoate: step 2/2. In terms of biological role, catalyzes the conversion of dethiobiotin (DTB) to biotin by the insertion of a sulfur atom into dethiobiotin via a radical-based mechanism. The chain is Biotin synthase from Desulfovibrio desulfuricans (strain ATCC 27774 / DSM 6949 / MB).